A 90-amino-acid polypeptide reads, in one-letter code: MAVKIRLKRMGANKKPFYRIVVADSRAPRDGKFIEEIGYYNPISEPKQVRINDEKAIKWLATGAQPTEVVKKLLVKNGVIEKFEASKQAK.

The protein belongs to the bacterial ribosomal protein bS16 family.

This is Small ribosomal subunit protein bS16 from Clostridioides difficile (strain 630) (Peptoclostridium difficile).